A 196-amino-acid chain; its full sequence is uncharacterized protein (196 aa).

The protein belongs to the flavoredoxin family. FMN is required as a cofactor.

This is an uncharacterized protein from Aquifex aeolicus (strain VF5).